The primary structure comprises 376 residues: Chaperone protein DnaJ (376 aa).

A J domain is found at 5 to 72 (DFYEVLGVPK…QKRAAYDQYG (68 aa)). A CR-type zinc finger spans residues 136–214 (GKEAQIRIPS…CHGQGRVKKQ (79 aa)). Zn(2+) is bound by residues C149, C152, C166, C169, C188, C191, C202, and C205. CXXCXGXG motif repeat units follow at residues 149-156 (CETCHGSG), 166-173 (CGTCQGSG), 188-195 (CPHCRGTG), and 202-209 (CTACHGQG). Disordered stretches follow at residues 227–246 (DGMR…GGPP) and 354–376 (KKGG…SFFS). Over residues 237–246 (GEPGTNGGPP) the composition is skewed to gly residues. Residues 367–376 (WTDRLKSFFS) are compositionally biased toward basic and acidic residues.

It belongs to the DnaJ family. In terms of assembly, homodimer. Requires Zn(2+) as cofactor.

Its subcellular location is the cytoplasm. Participates actively in the response to hyperosmotic and heat shock by preventing the aggregation of stress-denatured proteins and by disaggregating proteins, also in an autonomous, DnaK-independent fashion. Unfolded proteins bind initially to DnaJ; upon interaction with the DnaJ-bound protein, DnaK hydrolyzes its bound ATP, resulting in the formation of a stable complex. GrpE releases ADP from DnaK; ATP binding to DnaK triggers the release of the substrate protein, thus completing the reaction cycle. Several rounds of ATP-dependent interactions between DnaJ, DnaK and GrpE are required for fully efficient folding. Also involved, together with DnaK and GrpE, in the DNA replication of plasmids through activation of initiation proteins. This chain is Chaperone protein DnaJ, found in Acidovorax ebreus (strain TPSY) (Diaphorobacter sp. (strain TPSY)).